We begin with the raw amino-acid sequence, 431 residues long: Maintenance of mitochondrial morphology protein 1 (431 aa).

Residues 1–103 are Lumenal-facing; sequence MVSALEVKSI…QLISWSFAQG (103 aa). A helical transmembrane segment spans residues 104-124; that stretch reads LIIGQLSVVIFLIFFVKFFIF. Residues 125–431 are Cytoplasmic-facing; it reads TDASSKMDNP…EDESSKTPHS (307 aa). Residues 192–404 form the SMP-LTD domain; that stretch reads SAESLDWFNV…EPRFQSVKLP (213 aa). The segment at 412-431 is disordered; sequence NTREEVIHKTEDESSKTPHS.

The protein belongs to the MMM1 family. As to quaternary structure, homodimer. Component of the ER-mitochondria encounter structure (ERMES) or MDM complex, composed of MMM1, MDM10, MDM12 and MDM34. An MMM1 homodimer associates with one molecule of MDM12 on each side in a pairwise head-to-tail manner, and the SMP-LTD domains of MMM1 and MDM12 generate a continuous hydrophobic tunnel for phospholipid trafficking.

The protein localises to the endoplasmic reticulum membrane. Functionally, component of the ERMES/MDM complex, which serves as a molecular tether to connect the endoplasmic reticulum (ER) and mitochondria. Components of this complex are involved in the control of mitochondrial shape and protein biogenesis, and function in nonvesicular lipid trafficking between the ER and mitochondria. The MDM12-MMM1 subcomplex functions in the major beta-barrel assembly pathway that is responsible for biogenesis of all outer membrane beta-barrel proteins, and acts in a late step after the SAM complex. The MDM10-MDM12-MMM1 subcomplex further acts in the TOM40-specific pathway after the action of the MDM12-MMM1 complex. Essential for establishing and maintaining the structure of mitochondria and maintenance of mtDNA nucleoids. The chain is Maintenance of mitochondrial morphology protein 1 from Candida glabrata (strain ATCC 2001 / BCRC 20586 / JCM 3761 / NBRC 0622 / NRRL Y-65 / CBS 138) (Yeast).